Reading from the N-terminus, the 551-residue chain is Eukaryotic translation initiation factor 3 subunit D-2 (551 aa).

The segment at 108 to 152 (RARGRTGRGNATLGGLGGPVAGGSTANSTKYGKGRNTRNAQNMGR) is disordered. Over residues 119 to 128 (TLGGLGGPVA) the composition is skewed to gly residues. Positions 290 to 304 (QFDLLTVNETSLEPP) are RNA gate. The tract at residues 530–551 (AFDSDGDDESESSEPFGNSIDN) is disordered. Acidic residues predominate over residues 531 to 541 (FDSDGDDESES).

Belongs to the eIF-3 subunit D family. As to quaternary structure, component of the eukaryotic translation initiation factor 3 (eIF-3) complex. The eIF-3 complex interacts with pix.

The protein localises to the cytoplasm. Its function is as follows. mRNA cap-binding component of the eukaryotic translation initiation factor 3 (eIF-3) complex, which is involved in protein synthesis of a specialized repertoire of mRNAs and, together with other initiation factors, stimulates binding of mRNA and methionyl-tRNAi to the 40S ribosome. The eIF-3 complex specifically targets and initiates translation of a subset of mRNAs involved in cell proliferation. In the eIF-3 complex, eif3d specifically recognizes and binds the 7-methylguanosine cap of a subset of mRNAs. In Drosophila yakuba (Fruit fly), this protein is Eukaryotic translation initiation factor 3 subunit D-2.